Consider the following 342-residue polypeptide: Ribosomal RNA small subunit methyltransferase C (342 aa).

This sequence belongs to the methyltransferase superfamily. RsmC family. As to quaternary structure, monomer.

The protein localises to the cytoplasm. It catalyses the reaction guanosine(1207) in 16S rRNA + S-adenosyl-L-methionine = N(2)-methylguanosine(1207) in 16S rRNA + S-adenosyl-L-homocysteine + H(+). Its function is as follows. Specifically methylates the guanine in position 1207 of 16S rRNA in the 30S particle. The sequence is that of Ribosomal RNA small subunit methyltransferase C from Salmonella gallinarum (strain 287/91 / NCTC 13346).